Consider the following 261-residue polypeptide: Thiamine thiazole synthase (261 aa).

NAD(+)-binding positions include serine 33, 52–53 (ER), glycine 60, valine 124, and 152–154 (HVD). Fe cation contacts are provided by aspartate 154 and histidine 169. Methionine 219 contributes to the NAD(+) binding site. Glycine is bound at residue arginine 229.

This sequence belongs to the THI4 family. Homooctamer; tetramer of dimers. Fe(2+) is required as a cofactor.

It carries out the reaction hydrogen sulfide + glycine + NAD(+) = ADP-5-ethyl-4-methylthiazole-2-carboxylate + nicotinamide + 3 H2O + H(+). Its pathway is cofactor biosynthesis; thiamine diphosphate biosynthesis. Involved in the biosynthesis of the thiazole moiety of thiamine. Catalyzes the conversion of NAD and glycine to adenosine diphosphate 5-(2-hydroxyethyl)-4-methylthiazole-2-carboxylate (ADT), an adenylated thiazole intermediate, using free sulfide as a source of sulfur. This is Thiamine thiazole synthase from Pyrobaculum arsenaticum (strain DSM 13514 / JCM 11321 / PZ6).